Consider the following 155-residue polypeptide: 3-hydroxyacyl-[acyl-carrier-protein] dehydratase FabZ (155 aa).

His59 is an active-site residue.

Belongs to the thioester dehydratase family. FabZ subfamily.

Its subcellular location is the cytoplasm. It catalyses the reaction a (3R)-hydroxyacyl-[ACP] = a (2E)-enoyl-[ACP] + H2O. In terms of biological role, involved in unsaturated fatty acids biosynthesis. Catalyzes the dehydration of short chain beta-hydroxyacyl-ACPs and long chain saturated and unsaturated beta-hydroxyacyl-ACPs. This Bartonella quintana (strain Toulouse) (Rochalimaea quintana) protein is 3-hydroxyacyl-[acyl-carrier-protein] dehydratase FabZ.